Consider the following 99-residue polypeptide: Imizoquin biosynthesis cluster protein A (99 aa).

The protein operates within secondary metabolite biosynthesis. Part of the gene cluster that mediates the biosynthesis of imizoquins A to D, tripeptide-derived alkaloids that serve a protective role against oxidative stress that are essential for normal germination. ImqB is a canonical three-module NRPS that assembles the tripeptide backbone of the imizoquins via condensation of Trp, Tyr, and Leu-derived precursors. N-methylation by imqF and phenol oxidation by imqC, followed by cyclization via the FAD-dependent oxidase imqH carry out the three-step transformation of L-tyrosine into tetrahydroisoquinoline. Importantly, this sequence requires the presence of a free amine in the tyrosine moiety, indicating that isoquinoline formation occurs prior to peptide bond formation. The imidazolidin-4-one ring of imizoquins could form following additional oxidation of the methyl-derived bridgehead carbon by imqH. Lastly, O-methylation by imqG and leucine hydroxylation by imqE complete biosynthesis of the imizoquins. The sequence is that of Imizoquin biosynthesis cluster protein A from Aspergillus flavus (strain ATCC 200026 / FGSC A1120 / IAM 13836 / NRRL 3357 / JCM 12722 / SRRC 167).